Consider the following 176-residue polypeptide: Ribosome maturation factor RimM (176 aa).

Residues 99 to 173 (ADEYYWHDLL…TMTITPLEGL (75 aa)) form the PRC barrel domain.

This sequence belongs to the RimM family. In terms of assembly, binds ribosomal protein uS19.

The protein resides in the cytoplasm. Its function is as follows. An accessory protein needed during the final step in the assembly of 30S ribosomal subunit, possibly for assembly of the head region. Essential for efficient processing of 16S rRNA. May be needed both before and after RbfA during the maturation of 16S rRNA. It has affinity for free ribosomal 30S subunits but not for 70S ribosomes. The sequence is that of Ribosome maturation factor RimM from Trichlorobacter lovleyi (strain ATCC BAA-1151 / DSM 17278 / SZ) (Geobacter lovleyi).